A 541-amino-acid polypeptide reads, in one-letter code: Cilia- and flagella-associated protein 97 (541 aa).

Phosphoserine occurs at positions 8 and 19. 5 disordered regions span residues 28–47, 93–296, 313–337, 406–430, and 495–514; these read ESNS…GINK, ERKA…KQEN, RCVK…VLDA, LSRQ…PPKL, and HYSP…GLSC. Basic and acidic residues-rich tracts occupy residues 35–47, 93–107, and 142–151; these read KQND…GINK, ERKA…HIEN, and RIPKIVKGED. Residues 152 to 161 show a composition bias toward acidic residues; sequence DYYTDGEESS. Position 155 is a phosphothreonine (T155). A phosphoserine mark is found at S160 and S161. Over residues 176-201 the composition is skewed to low complexity; the sequence is SSNLKKNVSKKYSSSSLSSSSSRSNS. A compositionally biased stretch (basic and acidic residues) spans 207-218; it reads GSDRQRRSESHS. Composition is skewed to polar residues over residues 219–232 and 240–250; these read SGKC…SSPK and KSSAQPSSTKQ. S230 bears the Phosphoserine mark. A Phosphoserine modification is found at S258. Residues 267-277 show a composition bias toward polar residues; it reads PLSTPDVSPAQ. Residues 287 to 296 are compositionally biased toward basic and acidic residues; it reads QKVKVKKQEN. Positions 382–459 form a coiled coil; that stretch reads RKNYSFTREE…ALLKRLEAVK (78 aa). Over residues 503-513 the composition is skewed to polar residues; that stretch reads SRTSSATSGLS.

It belongs to the CFAP97 family. In terms of tissue distribution, highly expressed in testis with lower levels detected in other tissues including lung, heart and kidney.

The polypeptide is Cilia- and flagella-associated protein 97 (Mus musculus (Mouse)).